Consider the following 301-residue polypeptide: Large ribosomal subunit protein uL18z (301 aa).

Belongs to the universal ribosomal protein uL18 family. Component of the large ribosomal subunit (LSU). In terms of tissue distribution, expressed in seedlings, roots, stems, leaves, inflorescences and siliques.

It is found in the cytoplasm. Its subcellular location is the nucleus. The protein localises to the nucleolus. It localises to the nucleoplasm. Functionally, component of the ribosome, a large ribonucleoprotein complex responsible for the synthesis of proteins in the cell. The small ribosomal subunit (SSU) binds messenger RNAs (mRNAs) and translates the encoded message by selecting cognate aminoacyl-transfer RNA (tRNA) molecules. The large subunit (LSU) contains the ribosomal catalytic site termed the peptidyl transferase center (PTC), which catalyzes the formation of peptide bonds, thereby polymerizing the amino acids delivered by tRNAs into a polypeptide chain. The nascent polypeptides leave the ribosome through a tunnel in the LSU and interact with protein factors that function in enzymatic processing, targeting, and the membrane insertion of nascent chains at the exit of the ribosomal tunnel. Seems involved in the regulation of cell proliferation. Essential in leaf polarity establishment, probably having a role for translation in leaf dorsoventral patterning to specify leaf adaxial identity. The chain is Large ribosomal subunit protein uL18z from Arabidopsis thaliana (Mouse-ear cress).